Consider the following 379-residue polypeptide: Succinyl-diaminopimelate desuccinylase (379 aa).

Histidine 70 is a binding site for Zn(2+). Aspartate 72 is an active-site residue. A Zn(2+)-binding site is contributed by aspartate 103. The active-site Proton acceptor is the glutamate 137. Residues glutamate 138, glutamate 166, and histidine 352 each coordinate Zn(2+).

This sequence belongs to the peptidase M20A family. DapE subfamily. In terms of assembly, homodimer. It depends on Zn(2+) as a cofactor. Requires Co(2+) as cofactor.

The enzyme catalyses N-succinyl-(2S,6S)-2,6-diaminopimelate + H2O = (2S,6S)-2,6-diaminopimelate + succinate. It participates in amino-acid biosynthesis; L-lysine biosynthesis via DAP pathway; LL-2,6-diaminopimelate from (S)-tetrahydrodipicolinate (succinylase route): step 3/3. Functionally, catalyzes the hydrolysis of N-succinyl-L,L-diaminopimelic acid (SDAP), forming succinate and LL-2,6-diaminopimelate (DAP), an intermediate involved in the bacterial biosynthesis of lysine and meso-diaminopimelic acid, an essential component of bacterial cell walls. This is Succinyl-diaminopimelate desuccinylase from Burkholderia ambifaria (strain ATCC BAA-244 / DSM 16087 / CCUG 44356 / LMG 19182 / AMMD) (Burkholderia cepacia (strain AMMD)).